A 116-amino-acid chain; its full sequence is Protein TCL1B1 (116 aa).

Belongs to the TCL1 family.

This Mus musculus (Mouse) protein is Protein TCL1B1 (Tcl1b1).